The following is a 212-amino-acid chain: Translation initiation factor IF-3 (212 aa).

Residues 168 to 212 (MAPKAPASPKKDKADRPEGDAGDTDMAAPAPAPAAAPETESAPSA) are disordered. Over residues 176 to 186 (PKKDKADRPEG) the composition is skewed to basic and acidic residues. Over residues 194-212 (AAPAPAPAAAPETESAPSA) the composition is skewed to low complexity.

It belongs to the IF-3 family. Monomer.

Its subcellular location is the cytoplasm. Functionally, IF-3 binds to the 30S ribosomal subunit and shifts the equilibrium between 70S ribosomes and their 50S and 30S subunits in favor of the free subunits, thus enhancing the availability of 30S subunits on which protein synthesis initiation begins. The protein is Translation initiation factor IF-3 of Deinococcus radiodurans (strain ATCC 13939 / DSM 20539 / JCM 16871 / CCUG 27074 / LMG 4051 / NBRC 15346 / NCIMB 9279 / VKM B-1422 / R1).